Reading from the N-terminus, the 150-residue chain is Interferon antagonist OPG027 (150 aa).

This sequence belongs to the orthopoxvirus OPG027 family.

Functionally, inhibits antiviral activity induced by type I interferons. Does not block signal transduction of IFN, but is important to counteract the host antiviral state induced by a pre-treatment with IFN. This chain is Interferon antagonist OPG027 (OPG027), found in Vaccinia virus (strain Ankara) (VACV).